Here is a 309-residue protein sequence, read N- to C-terminus: 2-dehydro-3-deoxygluconokinase (309 aa).

Residues 28 to 32 (GDTLN), tyrosine 88, 102 to 104 (YWR), and arginine 170 each bind substrate. Residues 168–170 (NYR), 228–233 (KRGADS), and 261–264 (AAGD) contribute to the ATP site. Residue aspartate 264 coordinates substrate. Aspartate 264 serves as the catalytic Proton acceptor.

It belongs to the carbohydrate kinase pfkB family.

It carries out the reaction 2-dehydro-3-deoxy-D-gluconate + ATP = 2-dehydro-3-deoxy-6-phospho-D-gluconate + ADP + H(+). It functions in the pathway carbohydrate acid metabolism; 2-dehydro-3-deoxy-D-gluconate degradation; D-glyceraldehyde 3-phosphate and pyruvate from 2-dehydro-3-deoxy-D-gluconate: step 1/2. Its function is as follows. Catalyzes the phosphorylation of 2-keto-3-deoxygluconate (KDG) to produce 2-keto-3-deoxy-6-phosphogluconate (KDPG). The sequence is that of 2-dehydro-3-deoxygluconokinase (kdgK) from Escherichia coli (strain ATCC 9637 / CCM 2024 / DSM 1116 / LMG 11080 / NBRC 13500 / NCIMB 8666 / NRRL B-766 / W).